A 64-amino-acid polypeptide reads, in one-letter code: Cytochrome c oxidase subunit 5C-2 (64 aa).

Residues 15-34 traverse the membrane as a helical segment; the sequence is SVVKELVIGTVLGLAAGGLW.

It belongs to the cytochrome c oxidase subunit 5C family.

The protein resides in the mitochondrion inner membrane. This protein is one of the nuclear-coded polypeptide chains of cytochrome c oxidase, the terminal oxidase in mitochondrial electron transport. The protein is Cytochrome c oxidase subunit 5C-2 (COX5C2) of Helianthus annuus (Common sunflower).